The chain runs to 231 residues: NADH-ubiquinone oxidoreductase chain 4 (231 aa).

The next 6 helical transmembrane spans lie at 1–21, 34–54, 63–85, 89–111, 128–148, and 156–176; these read PIAGSMVLAAILLKLGGYGII, MFLPFLVLALWGAILANLTCL, IAYSSISHMGLVVAAIIIQTPWG, AMALMVAHGFTSSSLFCLANTTY, ILPMATTWWLLANLLNIATPP, and LLIMSALFNWCPTTIILLGLS.

The protein belongs to the complex I subunit 4 family.

The protein resides in the mitochondrion membrane. It catalyses the reaction a ubiquinone + NADH + 5 H(+)(in) = a ubiquinol + NAD(+) + 4 H(+)(out). In terms of biological role, core subunit of the mitochondrial membrane respiratory chain NADH dehydrogenase (Complex I) that is believed to belong to the minimal assembly required for catalysis. Complex I functions in the transfer of electrons from NADH to the respiratory chain. The immediate electron acceptor for the enzyme is believed to be ubiquinone. In Bothriechis lateralis (Side-striped palm pitviper), this protein is NADH-ubiquinone oxidoreductase chain 4 (MT-ND4).